The primary structure comprises 428 residues: Peptidase B (428 aa).

Residues lysine 195 and aspartate 200 each coordinate Mn(2+). Lysine 207 is a catalytic residue. 3 residues coordinate Mn(2+): aspartate 218, aspartate 277, and glutamate 279. Residue arginine 281 is part of the active site.

This sequence belongs to the peptidase M17 family. In terms of assembly, homohexamer. Requires Mn(2+) as cofactor.

It localises to the cytoplasm. It catalyses the reaction Release of an N-terminal amino acid, Xaa, from a peptide or arylamide. Xaa is preferably Glu or Asp but may be other amino acids, including Leu, Met, His, Cys and Gln.. Its function is as follows. Probably plays an important role in intracellular peptide degradation. This Cronobacter sakazakii (strain ATCC BAA-894) (Enterobacter sakazakii) protein is Peptidase B.